A 301-amino-acid chain; its full sequence is Glucose-1-phosphate adenylyltransferase large subunit (301 aa).

It belongs to the bacterial/plant glucose-1-phosphate adenylyltransferase family. Heterotetramer.

The protein localises to the plastid. It is found in the chloroplast. It localises to the amyloplast. The enzyme catalyses alpha-D-glucose 1-phosphate + ATP + H(+) = ADP-alpha-D-glucose + diphosphate. Its pathway is glycan biosynthesis; starch biosynthesis. Insensitive to 3'phosphoglycerate and orthophosphate. Its function is as follows. This protein plays a role in synthesis of starch. It catalyzes the synthesis of the activated glycosyl donor, ADP-glucose from Glc-1-P and ATP. This chain is Glucose-1-phosphate adenylyltransferase large subunit (AGA.1), found in Triticum aestivum (Wheat).